The following is a 150-amino-acid chain: uncharacterized protein (150 aa).

It belongs to the OsmC/Ohr family.

This is an uncharacterized protein from Bacillus subtilis (strain 168).